Here is a 263-residue protein sequence, read N- to C-terminus: Large ribosomal subunit protein uL23m (263 aa).

Residues 1-45 constitute a mitochondrion transit peptide; that stretch reads MPRLTVGTKNMLYPLQKTLAVGSCKPEQVPIRSLASVVESSSKIL.

Belongs to the universal ribosomal protein uL23 family. Component of the mitochondrial large ribosomal subunit (mt-LSU). Mature yeast 74S mitochondrial ribosomes consist of a small (37S) and a large (54S) subunit. The 37S small subunit contains a 15S ribosomal RNA (15S mt-rRNA) and 34 different proteins. The 54S large subunit contains a 21S rRNA (21S mt-rRNA) and 46 different proteins. uL23m forms the wall of the exit tunnel. Interacts with the C-terminus of OXA1.

Its subcellular location is the mitochondrion. Its function is as follows. Component of the mitochondrial ribosome (mitoribosome), a dedicated translation machinery responsible for the synthesis of mitochondrial genome-encoded proteins, including at least some of the essential transmembrane subunits of the mitochondrial respiratory chain. The mitoribosomes are attached to the mitochondrial inner membrane and translation products are cotranslationally integrated into the membrane. In Saccharomyces cerevisiae (strain ATCC 204508 / S288c) (Baker's yeast), this protein is Large ribosomal subunit protein uL23m (MRP20).